Reading from the N-terminus, the 335-residue chain is Mitochondrial carrier protein CoAc2 (335 aa).

The next 6 membrane-spanning stretches (helical) occupy residues Ser12–Val32, Phe75–Met95, Leu119–Val139, Gly187–Glu207, Leu225–Leu242, and Leu280–Tyr302. Solcar repeat units lie at residues Pro17–Trp103, Gln113–His212, and Lys219–Cys308.

The protein belongs to the mitochondrial carrier (TC 2.A.29) family. In terms of tissue distribution, expressed throughout the plant.

It localises to the mitochondrion inner membrane. In terms of biological role, required for the accumulation of coenzyme A in the mitochondrial matrix. In Zea mays (Maize), this protein is Mitochondrial carrier protein CoAc2.